A 696-amino-acid chain; its full sequence is uncharacterized protein (696 aa).

The next 10 helical transmembrane spans lie at 38–58 (IISI…NALA), 107–127 (LIYV…GYVV), 215–235 (AMAS…IFAL), 245–265 (SLFT…VVAL), 292–312 (TLPF…LIYL), 329–349 (VFFV…ILGE), 380–400 (FWVT…LTSA), 402–422 (FGAA…ACIG), 433–453 (FPSL…FLSS), and 457–477 (LVVA…IALP). CBS domains are found at residues 527-587 (RSPE…PMSS) and 617-674 (IHPT…THTG).

The protein belongs to the chloride channel (TC 2.A.49) family.

The protein resides in the membrane. Functionally, voltage-gated chloride channel. This is an uncharacterized protein from Schizosaccharomyces pombe (strain 972 / ATCC 24843) (Fission yeast).